The sequence spans 209 residues: Uridine kinase (209 aa).

12–19 (GGSASGKT) lines the ATP pocket.

Belongs to the uridine kinase family.

It is found in the cytoplasm. It catalyses the reaction uridine + ATP = UMP + ADP + H(+). The enzyme catalyses cytidine + ATP = CMP + ADP + H(+). It functions in the pathway pyrimidine metabolism; CTP biosynthesis via salvage pathway; CTP from cytidine: step 1/3. It participates in pyrimidine metabolism; UMP biosynthesis via salvage pathway; UMP from uridine: step 1/1. This chain is Uridine kinase, found in Chloroflexus aggregans (strain MD-66 / DSM 9485).